Here is a 287-residue protein sequence, read N- to C-terminus: Festuclavine synthase I (287 aa).

Belongs to the fgaFS/easG family.

The enzyme catalyses festuclavine + NAD(+) = 6,8-dimethyl-6,7-didehydroergoline + NADH + H(+). The protein operates within alkaloid biosynthesis; ergot alkaloid biosynthesis. In terms of biological role, festuclavine synthase; part of the gene cluster that mediates the biosynthesis of isofumigaclavines, fungal ergot alkaloids. The tryptophan dimethylallyltransferase ifgA catalyzes the first step of ergot alkaloid biosynthesis by condensing dimethylallyl diphosphate (DMAP) and tryptophan to form 4-dimethylallyl-L-tryptophan. The second step is catalyzed by the methyltransferase ifgB that methylates 4-dimethylallyl-L-tryptophan in the presence of S-adenosyl-L-methionine, resulting in the formation of N-methyl-dimethylallyl-L-tryptophan. The catalase ifgD and the FAD-dependent oxidoreductase ifgC then transform N-methyl-dimethylallyl-L-tryptophan to chanoclavine-I which is further oxidized by ifgE in the presence of NAD(+), resulting in the formation of chanoclavine-I aldehyde. The chanoclavine-I aldehyde reductases ifgG and/or fgaOx3 reduce chanoclavine-I aldehyde to dihydrochanoclavine-I aldehyde that spontaneously dehydrates to form 6,8-dimethyl-6,7-didehydroergoline. The festuclavine dehydrogenases ifgF1 and/or ifgF2 then catalyze the reduction of 6,8-dimethyl-6,7-didehydroergoline to form festuclavine. Hydrolysis of festuclavine by a yet undetermined cytochrome P450 monooxygenase (called ifgH) then leads to the formation of isofumigaclavine B which is in turn acetylated by ifgI to isofumigaclavine A. Penicillium roqueforti has interestingly at least two sets of genes for the consumption of chanoclavine-I aldehyde on three different loci, the OYEs ifgG/fgaOx3 and the festuclavine synthase homologs ifgF1/ifgF2. The reason for the duplication of these genes is unclear, probably to ensure the conversion of chanoclavine-I aldehyde by differential gene expression under various environmental conditions. This Penicillium roqueforti (strain FM164) protein is Festuclavine synthase I.